Consider the following 125-residue polypeptide: uncharacterized protein (125 aa).

A helical transmembrane segment spans residues 96–113; that stretch reads LFMMSIVSSYVCYITVLL.

It localises to the membrane. This is an uncharacterized protein from Saccharomyces cerevisiae (strain ATCC 204508 / S288c) (Baker's yeast).